A 433-amino-acid chain; its full sequence is 3-phosphoshikimate 1-carboxyvinyltransferase (433 aa).

3 residues coordinate 3-phosphoshikimate: Lys22, Ser23, and Arg27. Lys22 lines the phosphoenolpyruvate pocket. The phosphoenolpyruvate site is built by Gly96 and Arg129. 3-phosphoshikimate-binding residues include Ser175, Ser176, Gln177, Ser203, Asp318, Asn341, and Lys345. Position 177 (Gln177) interacts with phosphoenolpyruvate. Asp318 (proton acceptor) is an active-site residue. Residues Arg349, Arg393, and Lys418 each coordinate phosphoenolpyruvate.

Belongs to the EPSP synthase family. In terms of assembly, monomer.

The protein resides in the cytoplasm. It catalyses the reaction 3-phosphoshikimate + phosphoenolpyruvate = 5-O-(1-carboxyvinyl)-3-phosphoshikimate + phosphate. It participates in metabolic intermediate biosynthesis; chorismate biosynthesis; chorismate from D-erythrose 4-phosphate and phosphoenolpyruvate: step 6/7. Catalyzes the transfer of the enolpyruvyl moiety of phosphoenolpyruvate (PEP) to the 5-hydroxyl of shikimate-3-phosphate (S3P) to produce enolpyruvyl shikimate-3-phosphate and inorganic phosphate. This is 3-phosphoshikimate 1-carboxyvinyltransferase from Mannheimia succiniciproducens (strain KCTC 0769BP / MBEL55E).